Here is a 349-residue protein sequence, read N- to C-terminus: tRNA pseudouridine synthase D (349 aa).

Phenylalanine 27 is a binding site for substrate. Residue aspartate 80 is the Nucleophile of the active site. Substrate is bound at residue asparagine 129. Residues 155 to 303 form the TRUD domain; the sequence is GVPNYFGAQR…VEAARRAMLL (149 aa). Phenylalanine 329 serves as a coordination point for substrate.

Belongs to the pseudouridine synthase TruD family.

The catalysed reaction is uridine(13) in tRNA = pseudouridine(13) in tRNA. Functionally, responsible for synthesis of pseudouridine from uracil-13 in transfer RNAs. This is tRNA pseudouridine synthase D from Shigella boydii serotype 18 (strain CDC 3083-94 / BS512).